A 94-amino-acid chain; its full sequence is MAAFPHKIIFFLVCSTLTHVAFSGIFNKRDFTRWPKPRCKMYIPLDPDYNADCPNVTAPVCASNGHTFQNECFFCVEQREFHYRIKFEKYGKCD.

The N-terminal stretch at 1-23 (MAAFPHKIIFFLVCSTLTHVAFS) is a signal peptide. The region spanning 33–94 (RWPKPRCKMY…IKFEKYGKCD (62 aa)) is the Kazal-like domain. Cystine bridges form between cysteine 39–cysteine 75, cysteine 53–cysteine 72, and cysteine 61–cysteine 93. The N-linked (GlcNAc...) asparagine glycan is linked to asparagine 55.

It is found in the secreted. In terms of biological role, may be a serine protease inhibitor. Essential for sperm maturation and fertility. Inhibits sperm acrosome reaction, protecting sperm from premature reaction. This chain is Serine protease inhibitor Kazal-type 13 (SPINK13), found in Homo sapiens (Human).